A 494-amino-acid chain; its full sequence is Aspartyl/glutamyl-tRNA(Asn/Gln) amidotransferase subunit B (494 aa).

It belongs to the GatB/GatE family. GatB subfamily. Heterotrimer of A, B and C subunits.

The catalysed reaction is L-glutamyl-tRNA(Gln) + L-glutamine + ATP + H2O = L-glutaminyl-tRNA(Gln) + L-glutamate + ADP + phosphate + H(+). It catalyses the reaction L-aspartyl-tRNA(Asn) + L-glutamine + ATP + H2O = L-asparaginyl-tRNA(Asn) + L-glutamate + ADP + phosphate + 2 H(+). In terms of biological role, allows the formation of correctly charged Asn-tRNA(Asn) or Gln-tRNA(Gln) through the transamidation of misacylated Asp-tRNA(Asn) or Glu-tRNA(Gln) in organisms which lack either or both of asparaginyl-tRNA or glutaminyl-tRNA synthetases. The reaction takes place in the presence of glutamine and ATP through an activated phospho-Asp-tRNA(Asn) or phospho-Glu-tRNA(Gln). The polypeptide is Aspartyl/glutamyl-tRNA(Asn/Gln) amidotransferase subunit B (Rhodopseudomonas palustris (strain BisB5)).